The sequence spans 177 residues: ATP synthase subunit b (177 aa).

The helical transmembrane segment at 15–35 (GISGGTIIYQLLMFIILLALL) threads the bilayer.

This sequence belongs to the ATPase B chain family. As to quaternary structure, F-type ATPases have 2 components, F(1) - the catalytic core - and F(0) - the membrane proton channel. F(1) has five subunits: alpha(3), beta(3), gamma(1), delta(1), epsilon(1). F(0) has three main subunits: a(1), b(2) and c(10-14). The alpha and beta chains form an alternating ring which encloses part of the gamma chain. F(1) is attached to F(0) by a central stalk formed by the gamma and epsilon chains, while a peripheral stalk is formed by the delta and b chains.

Its subcellular location is the cell membrane. Its function is as follows. F(1)F(0) ATP synthase produces ATP from ADP in the presence of a proton or sodium gradient. F-type ATPases consist of two structural domains, F(1) containing the extramembraneous catalytic core and F(0) containing the membrane proton channel, linked together by a central stalk and a peripheral stalk. During catalysis, ATP synthesis in the catalytic domain of F(1) is coupled via a rotary mechanism of the central stalk subunits to proton translocation. Functionally, component of the F(0) channel, it forms part of the peripheral stalk, linking F(1) to F(0). The sequence is that of ATP synthase subunit b from Geobacillus kaustophilus (strain HTA426).